The primary structure comprises 168 residues: Bifunctional protein PyrR (168 aa).

The short motif at 90–102 (LVLIDDVLMSGRT) is the PRPP-binding element.

It belongs to the purine/pyrimidine phosphoribosyltransferase family. PyrR subfamily.

The enzyme catalyses UMP + diphosphate = 5-phospho-alpha-D-ribose 1-diphosphate + uracil. Regulates the transcription of the pyrimidine nucleotide (pyr) operon in response to exogenous pyrimidines. In terms of biological role, also displays a weak uracil phosphoribosyltransferase activity which is not physiologically significant. The protein is Bifunctional protein PyrR of Pseudomonas fluorescens (strain ATCC BAA-477 / NRRL B-23932 / Pf-5).